Reading from the N-terminus, the 303-residue chain is UDP-3-O-acyl-N-acetylglucosamine deacetylase (303 aa).

The Zn(2+) site is built by His78, His237, and Asp241. His264 (proton donor) is an active-site residue.

This sequence belongs to the LpxC family. Zn(2+) is required as a cofactor.

The catalysed reaction is a UDP-3-O-[(3R)-3-hydroxyacyl]-N-acetyl-alpha-D-glucosamine + H2O = a UDP-3-O-[(3R)-3-hydroxyacyl]-alpha-D-glucosamine + acetate. It functions in the pathway glycolipid biosynthesis; lipid IV(A) biosynthesis; lipid IV(A) from (3R)-3-hydroxytetradecanoyl-[acyl-carrier-protein] and UDP-N-acetyl-alpha-D-glucosamine: step 2/6. Catalyzes the hydrolysis of UDP-3-O-myristoyl-N-acetylglucosamine to form UDP-3-O-myristoylglucosamine and acetate, the committed step in lipid A biosynthesis. This is UDP-3-O-acyl-N-acetylglucosamine deacetylase from Saccharophagus degradans (strain 2-40 / ATCC 43961 / DSM 17024).